The chain runs to 522 residues: Semenogelin-2 (522 aa).

The signal sequence occupies residues 1–23 (MKSIILFVLSLLLILEKQAAVMG). Disordered stretches follow at residues 26–62 (CGSKGQLPSGSSQFPRGQKGQHYSGQKDEQHTKSKGS), 132–158 (GGQAHRGTQNPSQDQGNSPSGKGISSQ), 272–358 (NLNQ…ERHL), and 379–522 (EEQI…PVST). 2 stretches are compositionally biased toward polar residues: residues 31–40 (QLPSGSSQFP) and 137–158 (RGTQNPSQDQGNSPSGKGISSQ). Basic and acidic residues predominate over residues 292-310 (RTEERQLNRGEKSVQKDVS). Polar residues predominate over residues 325–335 (KSQNQVTIHSQ). The span at 336-345 (GQEHGHKENK) shows a compositional bias: basic and acidic residues. Polar residues-rich tracts occupy residues 379–397 (EEQIHGKSQNQVRIPSQAQ), 427–436 (KDVSQSSTSF), and 446–464 (SQIQTPNPNQDQWSVQNAK). Composition is skewed to basic and acidic residues over residues 465 to 492 (GKSDQSAGREQDLLSHEQKGRHQQESSE) and 499 to 522 (TEHEVAYDDHLTQQYNEDRNPVST).

The protein belongs to the semenogelin family. Interacts with SERPINA5.

It localises to the secreted. Its function is as follows. Participates in the formation of a gel matrix (sperm coagulum) entrapping the accessory gland secretions and ejaculated spermatozoa. This is Semenogelin-2 (SEMG2) from Hylobates klossii (Kloss's gibbon).